The sequence spans 493 residues: Aspartyl/glutamyl-tRNA(Asn/Gln) amidotransferase subunit B (493 aa).

This sequence belongs to the GatB/GatE family. GatB subfamily. As to quaternary structure, heterotrimer of A, B and C subunits.

The enzyme catalyses L-glutamyl-tRNA(Gln) + L-glutamine + ATP + H2O = L-glutaminyl-tRNA(Gln) + L-glutamate + ADP + phosphate + H(+). The catalysed reaction is L-aspartyl-tRNA(Asn) + L-glutamine + ATP + H2O = L-asparaginyl-tRNA(Asn) + L-glutamate + ADP + phosphate + 2 H(+). Its function is as follows. Allows the formation of correctly charged Asn-tRNA(Asn) or Gln-tRNA(Gln) through the transamidation of misacylated Asp-tRNA(Asn) or Glu-tRNA(Gln) in organisms which lack either or both of asparaginyl-tRNA or glutaminyl-tRNA synthetases. The reaction takes place in the presence of glutamine and ATP through an activated phospho-Asp-tRNA(Asn) or phospho-Glu-tRNA(Gln). The protein is Aspartyl/glutamyl-tRNA(Asn/Gln) amidotransferase subunit B of Aromatoleum aromaticum (strain DSM 19018 / LMG 30748 / EbN1) (Azoarcus sp. (strain EbN1)).